The sequence spans 155 residues: Phosphoprotein pp24 (155 aa).

The segment at 1 to 50 is disordered; it reads MEFEAEHEGLTASWVAPAPQGGKGAEGRAGVADEAGHGKTEAECAEDGEK. The span at 34-50 shows a compositional bias: basic and acidic residues; it reads EAGHGKTEAECAEDGEK. Positions 76 to 107 form a coiled coil; that stretch reads RKRIEAKYMDLLVEAERENKNLRKKYNIILDV.

The chain is Phosphoprotein pp24 (MDV008) from Gallus gallus (Chicken).